The primary structure comprises 243 residues: uncharacterized protein (243 aa).

Residues 71–120 (KRTNVSQRNRKKGIKNNRPHKDINSSPDWGNAHRGTDWQSEKANGMNRAK) are disordered. Over residues 78–88 (RNRKKGIKNNR) the composition is skewed to basic residues. Ser96 bears the Phosphoserine mark.

This is an uncharacterized protein from Saccharomyces cerevisiae (strain ATCC 204508 / S288c) (Baker's yeast).